The chain runs to 238 residues: 15,16-dihydrobiliverdin:ferredoxin oxidoreductase (238 aa).

It belongs to the HY2 family.

It catalyses the reaction 15,16-dihydrobiliverdin + oxidized 2[4Fe-4S]-[ferredoxin] = biliverdin IXalpha + reduced 2[4Fe-4S]-[ferredoxin] + 2 H(+). In terms of biological role, catalyzes the two-electron reduction of biliverdin IX-alpha at the C15 methine bridge. The protein is 15,16-dihydrobiliverdin:ferredoxin oxidoreductase of Prochlorococcus marinus (strain NATL2A).